Reading from the N-terminus, the 216-residue chain is Uracil phosphoribosyltransferase (216 aa).

Residues Arg85, Arg110, and Asp135–Ser143 each bind 5-phospho-alpha-D-ribose 1-diphosphate. Uracil-binding positions include Ile200 and Gly205–Ala207. Asp206 contacts 5-phospho-alpha-D-ribose 1-diphosphate.

It belongs to the UPRTase family. It depends on Mg(2+) as a cofactor.

The enzyme catalyses UMP + diphosphate = 5-phospho-alpha-D-ribose 1-diphosphate + uracil. It participates in pyrimidine metabolism; UMP biosynthesis via salvage pathway; UMP from uracil: step 1/1. Allosterically activated by GTP. In terms of biological role, catalyzes the conversion of uracil and 5-phospho-alpha-D-ribose 1-diphosphate (PRPP) to UMP and diphosphate. The polypeptide is Uracil phosphoribosyltransferase (Burkholderia multivorans (strain ATCC 17616 / 249)).